We begin with the raw amino-acid sequence, 364 residues long: Growth hormone secretagogue receptor type 1 (364 aa).

The Extracellular portion of the chain corresponds to 1–40; it reads MWNATPSEEPEPNVTLDLDWDASPGNDSLSDELLPLFPAP. Asparagine 13 and asparagine 26 each carry an N-linked (GlcNAc...) asparagine glycan. The chain crosses the membrane as a helical span at residues 41–66; that stretch reads LLAGVTATCVALFVVGISGNLLTMLV. Over 67 to 72 the chain is Cytoplasmic; it reads VSRFRE. A helical membrane pass occupies residues 73–96; that stretch reads LRTTTNLYLSSMAFSDLLIFLCMP. The Extracellular segment spans residues 97–117; that stretch reads LDLVRLWQYRPWNFGDLLCKL. An intrachain disulfide couples cysteine 115 to cysteine 197. A helical transmembrane segment spans residues 118–139; sequence FQFVSESCTYATVLTITALSVE. The Cytoplasmic portion of the chain corresponds to 140–162; sequence RYFAICFPLRAKVVVTKGRVKLV. The helical transmembrane segment at 163–183 threads the bilayer; the sequence is ILVIWAVAFCSAGPIFVLVGV. The Extracellular segment spans residues 184–211; the sequence is EHENGTDPRDTNECRATEFAVRSGLLTV. An N-linked (GlcNAc...) asparagine glycan is attached at asparagine 187. Residues 212-235 traverse the membrane as a helical segment; that stretch reads MVWVSSVFFFLPVFCLTVLYSLIG. Topologically, residues 236-263 are cytoplasmic; that stretch reads RKLWRRRGDAAVGSSLRDQNHKQTVKML. Residues 264 to 285 form a helical membrane-spanning segment; the sequence is AVVVFAFILCWLPFHVGRYLFS. Residues 286 to 302 are Extracellular-facing; the sequence is KSFEPGSLEIAQISQYC. A helical transmembrane segment spans residues 303-326; that stretch reads NLVSFVLFYLSAAINPILYNIMSK. Residues 327–364 are Cytoplasmic-facing; the sequence is KYRVAVFKLLGFESFSQRKLSTLKDESSRAWTKSSINT.

This sequence belongs to the G-protein coupled receptor 1 family.

Its subcellular location is the cell membrane. Its function is as follows. Receptor for ghrelin, coupled to G-alpha-11 proteins. Stimulates growth hormone secretion. Also binds other growth hormone releasing peptides (GHRP) (e.g. Met-enkephalin and GHRP-6) as well as non-peptide, low molecular weight secretagogues (e.g. L-692,429, MK-0677, adenosine). The sequence is that of Growth hormone secretagogue receptor type 1 (Ghsr) from Mus musculus (Mouse).